Consider the following 598-residue polypeptide: UvrABC system protein C (598 aa).

Residues serine 13–valine 92 form the GIY-YIG domain. The UVR domain maps to arginine 206 to threonine 241.

It belongs to the UvrC family. In terms of assembly, interacts with UvrB in an incision complex.

It is found in the cytoplasm. Functionally, the UvrABC repair system catalyzes the recognition and processing of DNA lesions. UvrC both incises the 5' and 3' sides of the lesion. The N-terminal half is responsible for the 3' incision and the C-terminal half is responsible for the 5' incision. This chain is UvrABC system protein C, found in Chlamydia trachomatis serovar A (strain ATCC VR-571B / DSM 19440 / HAR-13).